The following is a 467-amino-acid chain: Glutamate--tRNA ligase (467 aa).

A 'HIGH' region motif is present at residues proline 15–glycine 25. The short motif at lysine 249–arginine 253 is the 'KMSKS' region element. Lysine 252 is an ATP binding site.

It belongs to the class-I aminoacyl-tRNA synthetase family. Glutamate--tRNA ligase type 1 subfamily. As to quaternary structure, monomer.

It localises to the cytoplasm. The catalysed reaction is tRNA(Glu) + L-glutamate + ATP = L-glutamyl-tRNA(Glu) + AMP + diphosphate. Catalyzes the attachment of glutamate to tRNA(Glu) in a two-step reaction: glutamate is first activated by ATP to form Glu-AMP and then transferred to the acceptor end of tRNA(Glu). The polypeptide is Glutamate--tRNA ligase (Coprothermobacter proteolyticus (strain ATCC 35245 / DSM 5265 / OCM 4 / BT)).